The primary structure comprises 184 residues: MANKALILLAVLFCAQAVLGVTIVSKSEWGGRSATSKTSLASYLSYAVIHHTAGNYCSTKAACITQLKNIQAYHMDSLGWADIGYNFLIGGDGNVYEGRGWNVMGAHATNWNSKSIGISFLGNYNTNTLTSAQITAAKGLLSDAVSRGQIVSGYILYGHRQVGSTECPGTNIWNEIRTWSNWKA.

A signal peptide spans 1–20; sequence MANKALILLAVLFCAQAVLG. Positions 45–169 constitute an N-acetylmuramoyl-L-alanine amidase domain; sequence SYAVIHHTAG…RQVGSTECPG (125 aa). Zn(2+) is bound at residue histidine 50. Cysteine 57 and cysteine 63 form a disulfide bridge. Zn(2+) contacts are provided by histidine 159 and cysteine 167.

This sequence belongs to the N-acetylmuramoyl-L-alanine amidase 2 family. It depends on Zn(2+) as a cofactor.

It localises to the secreted. It catalyses the reaction Hydrolyzes the link between N-acetylmuramoyl residues and L-amino acid residues in certain cell-wall glycopeptides.. Its function is as follows. N-acetylmuramyl-L-alanine amidase involved in innate immunity by degrading bacterial peptidoglycans (PGN). Probably plays a scavenger role by digesting biologically active PGN into biologically inactive fragments. Has no direct bacteriolytic activity. The protein is Peptidoglycan-recognition protein SC2 (PGRP-SC2) of Drosophila simulans (Fruit fly).